The chain runs to 101 residues: MIPGEIIAASGDIELNAGAPTVTLEVSNTGDRPVQVGSHYHFAETNAGLSFDRAVARGKRLDIPAGTAVRFEPGQTRSVTLIPLSGKREVYGFRQLVMGKL.

It belongs to the urease beta subunit family. Heterotrimer of UreA (gamma), UreB (beta) and UreC (alpha) subunits. Three heterotrimers associate to form the active enzyme.

It localises to the cytoplasm. The enzyme catalyses urea + 2 H2O + H(+) = hydrogencarbonate + 2 NH4(+). It participates in nitrogen metabolism; urea degradation; CO(2) and NH(3) from urea (urease route): step 1/1. The protein is Urease subunit beta of Rhizobium johnstonii (strain DSM 114642 / LMG 32736 / 3841) (Rhizobium leguminosarum bv. viciae).